Consider the following 593-residue polypeptide: Tyrosine-protein phosphatase non-receptor type 11 (593 aa).

SH2 domains lie at Trp6–Leu102 and Trp112–Leu216. The Tyrosine-protein phosphatase domain maps to Phe247–Tyr521. Substrate-binding positions include Asp425, Cys459–Arg465, and Gln506. Cys459 functions as the Phosphocysteine intermediate in the catalytic mechanism. The segment covering Ser548–Gln557 has biased composition (polar residues). The disordered stretch occupies residues Ser548–Asp575. Over residues Pro559–Thr568 the composition is skewed to pro residues.

Belongs to the protein-tyrosine phosphatase family. Non-receptor class 2 subfamily. In terms of processing, phosphorylated by tyrosine-protein kinases. In terms of tissue distribution, expressed in embryonic fibroblast, hematopoietic, erythroid, myeloid and lymphoid cells.

Its subcellular location is the cytoplasm. It carries out the reaction O-phospho-L-tyrosyl-[protein] + H2O = L-tyrosyl-[protein] + phosphate. Its function is as follows. This PTPase activity may directly link growth factor receptors and other signaling proteins through protein-tyrosine phosphorylation. The SH2 regions may interact with other cellular components to modulate its own phosphatase activity against interacting substrates. May play a positive role during the stages of erythroid cell proliferation. The sequence is that of Tyrosine-protein phosphatase non-receptor type 11 (PTPN11) from Gallus gallus (Chicken).